A 276-amino-acid chain; its full sequence is NH(3)-dependent NAD(+) synthetase (276 aa).

43–50 (GISGGVDS) is a binding site for ATP. Aspartate 49 lines the Mg(2+) pocket. Arginine 146 contacts deamido-NAD(+). Threonine 166 serves as a coordination point for ATP. Glutamate 171 is a Mg(2+) binding site. Deamido-NAD(+) is bound by residues lysine 179 and aspartate 186. ATP contacts are provided by lysine 195 and threonine 217. Residue 266 to 267 (HK) participates in deamido-NAD(+) binding.

It belongs to the NAD synthetase family. As to quaternary structure, homodimer.

It catalyses the reaction deamido-NAD(+) + NH4(+) + ATP = AMP + diphosphate + NAD(+) + H(+). Its pathway is cofactor biosynthesis; NAD(+) biosynthesis; NAD(+) from deamido-NAD(+) (ammonia route): step 1/1. Its function is as follows. Catalyzes the ATP-dependent amidation of deamido-NAD to form NAD. Uses ammonia as a nitrogen source. The sequence is that of NH(3)-dependent NAD(+) synthetase from Shewanella pealeana (strain ATCC 700345 / ANG-SQ1).